Consider the following 320-residue polypeptide: Pyrroline-5-carboxylate reductase 2 (320 aa).

N-acetylserine is present on serine 2. NADP(+) contacts are provided by residues 6-11 (IGAGQL) and serine 34. Alanine 8, glutamine 10, leucine 11, serine 34, glutamate 36, asparagine 56, valine 70, lysine 71, and alanine 97 together coordinate NADPH. NADP(+) is bound by residues asparagine 56, 69–72 (AVKP), and 95–97 (CAA). Glutamate 164 serves as a coordination point for L-proline. Asparagine 230 lines the NADPH pocket. L-proline contacts are provided by alanine 237 and threonine 238. The tract at residues 298–320 (TTLTPTSSGKLLTRSPVPGGKKD) is disordered. Phosphoserine is present on serine 304.

It belongs to the pyrroline-5-carboxylate reductase family. In terms of assembly, homodecamer; composed of 5 homodimers. Interacts with LTO1.

It is found in the cytoplasm. It localises to the mitochondrion. It carries out the reaction L-proline + NADP(+) = (S)-1-pyrroline-5-carboxylate + NADPH + 2 H(+). It catalyses the reaction L-proline + NAD(+) = (S)-1-pyrroline-5-carboxylate + NADH + 2 H(+). It participates in amino-acid biosynthesis; L-proline biosynthesis; L-proline from L-glutamate 5-semialdehyde: step 1/1. Its function is as follows. Oxidoreductase that catalyzes the last step in proline biosynthesis, which corresponds to the reduction of pyrroline-5-carboxylate to L-proline using NAD(P)H. At physiologic concentrations, has higher specific activity in the presence of NADH. Involved in cellular response to oxidative stress. In some cell types, such as erythrocytes, its primary function may be the generation of NADP(+). The sequence is that of Pyrroline-5-carboxylate reductase 2 (PYCR2) from Bos taurus (Bovine).